A 268-amino-acid polypeptide reads, in one-letter code: Cyclohexadienyl dehydratase (268 aa).

A signal peptide spans 1-25 (MPKSFRHLVQALACLALLASASLQA).

This sequence belongs to the bacterial solute-binding protein 3 family. Homodimer.

It localises to the periplasm. It catalyses the reaction prephenate + H(+) = 3-phenylpyruvate + CO2 + H2O. The catalysed reaction is L-arogenate + H(+) = L-phenylalanine + CO2 + H2O. Its pathway is amino-acid biosynthesis; L-phenylalanine biosynthesis; L-phenylalanine from L-arogenate: step 1/1. It participates in amino-acid biosynthesis; L-phenylalanine biosynthesis; phenylpyruvate from prephenate: step 1/1. Its function is as follows. Forms alternative pathway for phenylalanine biosynthesis. Can catalyze two reactions: prephenate dehydratase and arogenate dehydratase. May have a role in chemotaxis or transport. This chain is Cyclohexadienyl dehydratase (pheC), found in Pseudomonas aeruginosa (strain ATCC 15692 / DSM 22644 / CIP 104116 / JCM 14847 / LMG 12228 / 1C / PRS 101 / PAO1).